The sequence spans 326 residues: Elongation factor Ts (326 aa).

The tract at residues 80–83 (TDFV) is involved in Mg(2+) ion dislocation from EF-Tu.

This sequence belongs to the EF-Ts family.

The protein resides in the cytoplasm. In terms of biological role, associates with the EF-Tu.GDP complex and induces the exchange of GDP to GTP. It remains bound to the aminoacyl-tRNA.EF-Tu.GTP complex up to the GTP hydrolysis stage on the ribosome. The polypeptide is Elongation factor Ts (Rhodopirellula baltica (strain DSM 10527 / NCIMB 13988 / SH1)).